The primary structure comprises 332 residues: Beta-hexosaminidase (332 aa).

Substrate-binding positions include Asp62, Arg70, Arg131, and 161-162 (KH). Catalysis depends on His174, which acts as the Proton donor/acceptor. The active-site Nucleophile is the Asp244.

This sequence belongs to the glycosyl hydrolase 3 family. NagZ subfamily.

It localises to the cytoplasm. It catalyses the reaction Hydrolysis of terminal non-reducing N-acetyl-D-hexosamine residues in N-acetyl-beta-D-hexosaminides.. It functions in the pathway cell wall biogenesis; peptidoglycan recycling. In terms of biological role, plays a role in peptidoglycan recycling by cleaving the terminal beta-1,4-linked N-acetylglucosamine (GlcNAc) from peptide-linked peptidoglycan fragments, giving rise to free GlcNAc, anhydro-N-acetylmuramic acid and anhydro-N-acetylmuramic acid-linked peptides. This is Beta-hexosaminidase from Pseudomonas aeruginosa (strain LESB58).